The primary structure comprises 214 residues: Reticulon-3-A (214 aa).

The interval 1-21 (MAETSGPQSSHISSSSVGEKG) is disordered. A Reticulon domain is found at 26–214 (VRDLLYWRDV…LPGALKKKSE (189 aa)). 2 consecutive transmembrane segments (helical) span residues 46–66 (MVLL…YLVL) and 155–175 (VFNG…APIV).

As to quaternary structure, homodimer. As to expression, expressed in the animal hemisphere at the four-cell stage. During gastrulation, expression becomes restricted to the prospective neuroectoderm. At the early tail bud stage, expressed in the head structure. At the tadpole stage, expressed in head and neural tissues including the otic vesicle and optic nerve.

It localises to the endoplasmic reticulum membrane. It is found in the golgi apparatus membrane. May be involved in membrane trafficking in the early secretory pathway. In Xenopus laevis (African clawed frog), this protein is Reticulon-3-A (rtn3-a).